Here is a 541-residue protein sequence, read N- to C-terminus: Peptide chain release factor 3 (541 aa).

Residues 14-283 form the tr-type G domain; it reads EARRNFAIIS…AFLDYALKPG (270 aa). Residues 23-30, 91-95, and 145-148 each bind GTP; these read SHPDAGKT, DTPGH, and NKLD.

It belongs to the TRAFAC class translation factor GTPase superfamily. Classic translation factor GTPase family. PrfC subfamily.

It is found in the cytoplasm. In terms of biological role, increases the formation of ribosomal termination complexes and stimulates activities of RF-1 and RF-2. It binds guanine nucleotides and has strong preference for UGA stop codons. It may interact directly with the ribosome. The stimulation of RF-1 and RF-2 is significantly reduced by GTP and GDP, but not by GMP. The sequence is that of Peptide chain release factor 3 from Acaryochloris marina (strain MBIC 11017).